The following is a 152-amino-acid chain: Superoxide dismutase [Cu-Zn] (152 aa).

C7 carries the S-palmitoyl cysteine lipid modification. Cu cation contacts are provided by H47, H49, and H64. C58 and C146 are oxidised to a cystine. H64, H72, H81, and D84 together coordinate Zn(2+). Residue H120 participates in Cu cation binding.

This sequence belongs to the Cu-Zn superoxide dismutase family. In terms of assembly, homodimer. Cu cation serves as cofactor. Zn(2+) is required as a cofactor.

It localises to the cytoplasm. The protein localises to the nucleus. The enzyme catalyses 2 superoxide + 2 H(+) = H2O2 + O2. Destroys radicals which are normally produced within the cells and which are toxic to biological systems. The chain is Superoxide dismutase [Cu-Zn] (sod1) from Xiphias gladius (Swordfish).